Here is a 370-residue protein sequence, read N- to C-terminus: Gibberellin 3-beta-dioxygenase 2-2 (370 aa).

One can recognise a Fe2OG dioxygenase domain in the interval 205–306 (MTATMHLNWY…RISLGYFLGP (102 aa)). The Fe cation site is built by histidine 229, aspartate 231, and histidine 287. The active site involves arginine 297.

It belongs to the iron/ascorbate-dependent oxidoreductase family. GA3OX subfamily. It depends on L-ascorbate as a cofactor. Requires Fe cation as cofactor.

It catalyses the reaction gibberellin A20 + 2-oxoglutarate + O2 = gibberellin A1 + succinate + CO2. In terms of biological role, converts the inactive gibberellin precursors GA9 and GA20 in the bioactives gibberellins GA4 and GA1. This is Gibberellin 3-beta-dioxygenase 2-2 (GA3ox2-2) from Triticum aestivum (Wheat).